The sequence spans 113 residues: Probable 4-amino-4-deoxy-L-arabinose-phosphoundecaprenol flippase subunit ArnE (113 aa).

Transmembrane regions (helical) follow at residues 40–60 (FGWLMLAALLLGIGLLLWLLV), 64–84 (LPLGVAYPLLSINFVLVTLLA), and 92–112 (VDRHHWWGIALIVIGIYLMQG).

This sequence belongs to the ArnE family. Heterodimer of ArnE and ArnF.

The protein localises to the cell inner membrane. Its pathway is bacterial outer membrane biogenesis; lipopolysaccharide biosynthesis. Translocates 4-amino-4-deoxy-L-arabinose-phosphoundecaprenol (alpha-L-Ara4N-phosphoundecaprenol) from the cytoplasmic to the periplasmic side of the inner membrane. This chain is Probable 4-amino-4-deoxy-L-arabinose-phosphoundecaprenol flippase subunit ArnE, found in Pectobacterium atrosepticum (strain SCRI 1043 / ATCC BAA-672) (Erwinia carotovora subsp. atroseptica).